The following is a 1892-amino-acid chain: Protein TIC 214 (1892 aa).

6 helical membrane passes run 18–38 (IINSVVVVGLYYGFLTTFSIG), 64–84 (FITGQLMMFISIYYAPLHLAL), 87–107 (PHTITVLALPYLLFHFFWNNH), 124–144 (LSIQCVFLNNLIFQLFNHFIL), 172–192 (VGWLIGHIFFMKWLGLVLVWI), and 221–241 (IFSILLFITCVYYLGRIPSPI). Disordered stretches follow at residues 250-300 (SKTE…EGWD), 794-814 (REEQTKREEKKEKDKKGENKR), and 1581-1609 (RIQEEKEPASQGEKERGSDIENKGNLGPV). The span at 256–268 (VESEEEKDVEIET) shows a compositional bias: acidic residues. The span at 1581 to 1602 (RIQEEKEPASQGEKERGSDIEN) shows a compositional bias: basic and acidic residues.

This sequence belongs to the TIC214 family. In terms of assembly, part of the Tic complex.

It is found in the plastid. The protein localises to the chloroplast inner membrane. Functionally, involved in protein precursor import into chloroplasts. May be part of an intermediate translocation complex acting as a protein-conducting channel at the inner envelope. The polypeptide is Protein TIC 214 (Nicotiana tomentosiformis (Tobacco)).